A 120-amino-acid chain; its full sequence is uncharacterized protein (120 aa).

The protein to M.tuberculosis Rv0026 and Rv0739.

This is an uncharacterized protein from Mycobacterium tuberculosis (strain CDC 1551 / Oshkosh).